Here is an 84-residue protein sequence, read N- to C-terminus: Putative membrane protein insertion efficiency factor (84 aa).

Residues 63–84 are disordered; the sequence is LGGSGYDPPPPPKTPRKWKCEE.

The protein belongs to the UPF0161 family.

Its subcellular location is the cell inner membrane. Could be involved in insertion of integral membrane proteins into the membrane. The sequence is that of Putative membrane protein insertion efficiency factor from Caulobacter sp. (strain K31).